The chain runs to 87 residues: Large ribosomal subunit protein eL31 (87 aa).

The protein belongs to the eukaryotic ribosomal protein eL31 family.

The sequence is that of Large ribosomal subunit protein eL31 (rpl31e) from Methanocaldococcus jannaschii (strain ATCC 43067 / DSM 2661 / JAL-1 / JCM 10045 / NBRC 100440) (Methanococcus jannaschii).